The following is a 330-amino-acid chain: Ketol-acid reductoisomerase (NADP(+)) (330 aa).

Residues 2–182 (VETFYEKDAD…GCTRAGVIKT (181 aa)) form the KARI N-terminal Rossmann domain. NADP(+)-binding positions include 25 to 28 (YGSQ), Lys48, Ser51, Ser53, and 83 to 86 (DEVQ). His108 is an active-site residue. Gly134 is a binding site for NADP(+). The KARI C-terminal knotted domain occupies 183–328 (TFKEETETDL…EKLRAMMPWI (146 aa)). Positions 191, 195, 227, and 231 each coordinate Mg(2+). Ser252 is a substrate binding site.

The protein belongs to the ketol-acid reductoisomerase family. The cofactor is Mg(2+).

It catalyses the reaction (2R)-2,3-dihydroxy-3-methylbutanoate + NADP(+) = (2S)-2-acetolactate + NADPH + H(+). The catalysed reaction is (2R,3R)-2,3-dihydroxy-3-methylpentanoate + NADP(+) = (S)-2-ethyl-2-hydroxy-3-oxobutanoate + NADPH + H(+). Its pathway is amino-acid biosynthesis; L-isoleucine biosynthesis; L-isoleucine from 2-oxobutanoate: step 2/4. It participates in amino-acid biosynthesis; L-valine biosynthesis; L-valine from pyruvate: step 2/4. Involved in the biosynthesis of branched-chain amino acids (BCAA). Catalyzes an alkyl-migration followed by a ketol-acid reduction of (S)-2-acetolactate (S2AL) to yield (R)-2,3-dihydroxy-isovalerate. In the isomerase reaction, S2AL is rearranged via a Mg-dependent methyl migration to produce 3-hydroxy-3-methyl-2-ketobutyrate (HMKB). In the reductase reaction, this 2-ketoacid undergoes a metal-dependent reduction by NADPH to yield (R)-2,3-dihydroxy-isovalerate. The sequence is that of Ketol-acid reductoisomerase (NADP(+)) from Petrotoga mobilis (strain DSM 10674 / SJ95).